Consider the following 748-residue polypeptide: Far upstream element-binding protein 2 (748 aa).

A disordered region spans residues 1 to 78; that stretch reads MSDYNTGGPP…GIRKDAFADA (78 aa). An N-acetylserine modification is found at S2. Over residues 8–17 the composition is skewed to pro residues; sequence GPPPGPPPPA. 2 stretches are compositionally biased toward gly residues: residues 18–28 and 36–69; these read GGGGGAAGAGG and GAGD…GGPG. At R40 the chain carries Omega-N-methylarginine. N6-acetyllysine is present on K88. Residues 90 to 148 form a disordered region; the sequence is GGDAATTVNNNTPDFGFGGQKRQLEDGDQPDSKKLASQGDSIGSQLGPIHPPPRTSMTE. A Phosphothreonine modification is found at T101. Over residues 111-123 the composition is skewed to basic and acidic residues; sequence RQLEDGDQPDSKK. K122 is covalently cross-linked (Glycyl lysine isopeptide (Lys-Gly) (interchain with G-Cter in SUMO1); alternate). K122 participates in a covalent cross-link: Glycyl lysine isopeptide (Lys-Gly) (interchain with G-Cter in SUMO2); alternate. S126, S130, S182, S185, S194, and S275 each carry phosphoserine. 3 consecutive KH domains span residues 145 to 209, 234 to 300, and 323 to 387; these read SMTE…KMML, GTVQ…CEMV, and GGGI…ARII. Residues 394-422 are disordered; sequence LRSGPPGPPGAPGMPPGGRGRGRGQGNWG. Residues 398–408 are compositionally biased toward pro residues; that stretch reads PPGPPGAPGMP. Residues 409-422 show a composition bias toward gly residues; that stretch reads PGGRGRGRGQGNWG. Residues R412, R414, R416, and R443 each carry the omega-N-methylarginine modification. The KH 4 domain maps to 425–492; the sequence is GGEMTFSIPT…QQIDHAKQLI (68 aa). Residue S481 is modified to Phosphoserine. Positions 498–570 are disordered; it reads GPLCPVGPGP…HDPNKAAAAA (73 aa). Pro residues-rich tracts occupy residues 502–521 and 529–543; these read PVGP…PFNP and PGAP…PHQY. The stretch at 572–583 is repeat 1; the sequence is DPNAAWAAYYSH. Positions 572–685 are 4 X 12 AA imperfect repeats; the sequence is DPNAAWAAYY…SAAWAEYYRQ (114 aa). Residues 588–614 are compositionally biased toward pro residues; that stretch reads PPGPVPGPAPAPAAPPAQGEPPQPPPT. Disordered stretches follow at residues 588–650, 659–678, and 689–735; these read PPGP…KAWE, VATG…YSAA, and YYGQ…PALV. 3 repeat units span residues 618–629, 644–655, and 674–685.

Belongs to the KHSRP family. As to quaternary structure, part of a ternary complex containing FUBP2, PTBP1, PTBP2 and HNRPH1. Interacts with PARN. Interacts with PQBP1.

It is found in the nucleus. The protein localises to the cytoplasm. Binds to the dendritic targeting element and may play a role in mRNA trafficking. Part of a ternary complex that binds to the downstream control sequence (DCS) of the pre-mRNA. Mediates exon inclusion in transcripts that are subject to tissue-specific alternative splicing. May interact with single-stranded DNA from the far-upstream element (FUSE). May activate gene expression. Also involved in degradation of inherently unstable mRNAs that contain AU-rich elements (AREs) in their 3'-UTR, possibly by recruiting degradation machinery to ARE-containing mRNAs. The polypeptide is Far upstream element-binding protein 2 (Khsrp) (Mus musculus (Mouse)).